Reading from the N-terminus, the 242-residue chain is Sec-independent protein translocase protein TatCd (242 aa).

Helical transmembrane passes span 19 to 39, 60 to 80, and 107 to 127; these read IIVT…FVQD, ILWV…IPVA, and LFAL…PIVL. Positions 128–149 are interaction with TatAd; sequence SFLTHLSSGHFETMFTADRYFR. The chain crosses the membrane as a helical span at residues 150–170; sequence FMVNLSLPFGFLFEMPLVVMF. The tract at residues 171–187 is interaction with TatAd; the sequence is LTRLGILNPYRLAKARK. 2 helical membrane passes run 188–208 and 209–229; these read LSYF…FISD and FLVM…SAFV.

Belongs to the TatC family. Forms a complex with TatAd. Two types of complexes exist: one composed of TatAd and TatCd, and another composed only of TatAd.

It is found in the cell membrane. Its function is as follows. Part of the twin-arginine translocation (Tat) system that transports large folded proteins containing a characteristic twin-arginine motif in their signal peptide across membranes. Required for PhoD secretion. TatCd promotes membrane localization of TatAd via domain specific interactions. TatCd is required for stabile production of TatAd as well as for its maintenance. This Bacillus subtilis (strain 168) protein is Sec-independent protein translocase protein TatCd.